The chain runs to 254 residues: L-rhamnose 1-dehydrogenase (NAD(P)(+)) (254 aa).

The NADP(+) site is built by Gly13, Ser15, Ile18, Asp64, Val65, and Asn91. Ser144 functions as the Proton donor in the catalytic mechanism. 4 residues coordinate beta-L-rhamnose: Ser144, Ser146, Gln154, and Tyr157. The NADP(+) site is built by Tyr157 and Lys161. Tyr157 functions as the Proton acceptor in the catalytic mechanism. The active-site Lowers pKa of active site Tyr is Lys161. Thr189 lines the beta-L-rhamnose pocket. Residue Ile190 coordinates NADP(+). Asn195 is a beta-L-rhamnose binding site.

This sequence belongs to the short-chain dehydrogenases/reductases (SDR) family.

It catalyses the reaction L-rhamnofuranose + NAD(+) = L-rhamnono-1,4-lactone + NADH + H(+). It carries out the reaction L-rhamnofuranose + NADP(+) = L-rhamnono-1,4-lactone + NADPH + H(+). It functions in the pathway carbohydrate degradation; L-rhamnose degradation. In terms of biological role, NAD(P)-dependent dehydrogenase that catalyzes the oxidation of L-rhamnose to L-rhamnono-1,4-lactone. Also shows high activity with L-lyxose and low activity with L-mannose. Can utilize either NAD(+) or NADP(+), with a slight preference for NADP(+). Catalyzes the first step in an alternative pathway for rhamnose utilization that does not involve phosphorylated intermediates. The polypeptide is L-rhamnose 1-dehydrogenase (NAD(P)(+)) (Sphingomonas sp. (strain SKA58)).